Here is a 78-residue protein sequence, read N- to C-terminus: Hainantoxin-XX (78 aa).

The signal sequence occupies residues 1-23 (MKSATLLALSFLLIALYFLICEA). The propeptide occupies 24–47 (EHSRYEEHEILEENMGDVVNLEQR). Disulfide bonds link Cys-49–Cys-62, Cys-56–Cys-66, and Cys-61–Cys-77.

The protein belongs to the hainantoxin family. 20 subfamily. As to expression, expressed by the venom gland.

It is found in the secreted. Its function is as follows. Putative ion channel inhibitor. The polypeptide is Hainantoxin-XX (Cyriopagopus hainanus (Chinese bird spider)).